The primary structure comprises 444 residues: ATP-dependent protease ATPase subunit HslU (444 aa).

ATP contacts are provided by residues isoleucine 18 and 60–65; that span reads GVGKTE. The segment at 143–163 is disordered; that stretch reads WGEVENHDSHSSTRQAFRKKL. ATP-binding residues include aspartate 257, glutamate 322, and arginine 394.

Belongs to the ClpX chaperone family. HslU subfamily. A double ring-shaped homohexamer of HslV is capped on each side by a ring-shaped HslU homohexamer. The assembly of the HslU/HslV complex is dependent on binding of ATP.

The protein localises to the cytoplasm. In terms of biological role, ATPase subunit of a proteasome-like degradation complex; this subunit has chaperone activity. The binding of ATP and its subsequent hydrolysis by HslU are essential for unfolding of protein substrates subsequently hydrolyzed by HslV. HslU recognizes the N-terminal part of its protein substrates and unfolds these before they are guided to HslV for hydrolysis. The chain is ATP-dependent protease ATPase subunit HslU from Haemophilus influenzae (strain 86-028NP).